The sequence spans 173 residues: Cytochrome c homolog (173 aa).

The Cytoplasmic segment spans residues 1 to 8; that stretch reads MSGKELNK. A helical; Signal-anchor transmembrane segment spans residues 9 to 29; sequence IVAAILFASLIAMMVGFIANI. Residues 30–173 are Periplasmic-facing; that stretch reads LYKPVLEPKH…LFLKTYVHDK (144 aa). Heme c-binding residues include Cys-82, Cys-85, His-86, and Met-148.

The protein belongs to the cytochrome c family. In terms of processing, binds 1 heme c group covalently per subunit.

It is found in the cell membrane. May be involved in electron transfer from bc1 complex to aa3. This Rickettsia bellii (strain RML369-C) protein is Cytochrome c homolog (cycM).